We begin with the raw amino-acid sequence, 306 residues long: Putative beta-lactamase HcpD (306 aa).

The N-terminal stretch at 1–25 (MIKSWTKKWFLILFLMASCSSYLVA) is a signal peptide. TPR repeat units follow at residues 28 to 61 (GEKY…RVGV), 96 to 133 (HLAC…KGGV), 168 to 205 (GISC…KDGA), and 240 to 277 (GSGC…GFSG). Intrachain disulfides connect cysteine 55/cysteine 63, cysteine 91/cysteine 99, cysteine 127/cysteine 135, cysteine 163/cysteine 171, cysteine 199/cysteine 207, cysteine 235/cysteine 243, and cysteine 271/cysteine 279.

Belongs to the hcp beta-lactamase family.

It localises to the secreted. It carries out the reaction a beta-lactam + H2O = a substituted beta-amino acid. Functionally, may hydrolyze 6-aminopenicillinic acid and 7-aminocephalosporanic acid (ACA) derivatives. Binds to penicillin. This is Putative beta-lactamase HcpD (hcpD) from Helicobacter pylori (strain ATCC 700392 / 26695) (Campylobacter pylori).